We begin with the raw amino-acid sequence, 165 residues long: Regulator of ribonuclease activity A (165 aa).

It belongs to the RraA family. In terms of assembly, homotrimer. Binds to both RNA-binding sites in the C-terminal region of Rne and to RhlB.

Its subcellular location is the cytoplasm. Functionally, globally modulates RNA abundance by binding to RNase E (Rne) and regulating its endonucleolytic activity. Can modulate Rne action in a substrate-dependent manner by altering the composition of the degradosome. Modulates RNA-binding and helicase activities of the degradosome. This chain is Regulator of ribonuclease activity A, found in Actinobacillus pleuropneumoniae serotype 5b (strain L20).